A 134-amino-acid polypeptide reads, in one-letter code: Arginine decarboxylase proenzyme (134 aa).

Serine 82 (schiff-base intermediate with substrate; via pyruvic acid) is an active-site residue. At serine 82 the chain carries Pyruvic acid (Ser); by autocatalysis. Catalysis depends on histidine 87, which acts as the Proton acceptor; for processing activity. Residue cysteine 102 is the Proton donor; for catalytic activity of the active site.

The protein belongs to the prokaryotic AdoMetDC family. Type 1 subfamily. In terms of assembly, heterooctamer of four alpha and four beta chains arranged as a tetramer of alpha/beta heterodimers. Requires pyruvate as cofactor. Is synthesized initially as an inactive proenzyme. Formation of the active enzyme involves a self-maturation process in which the active site pyruvoyl group is generated from an internal serine residue via an autocatalytic post-translational modification. Two non-identical subunits are generated from the proenzyme in this reaction, and the pyruvate is formed at the N-terminus of the alpha chain, which is derived from the carboxyl end of the proenzyme. The post-translation cleavage follows an unusual pathway, termed non-hydrolytic serinolysis, in which the side chain hydroxyl group of the serine supplies its oxygen atom to form the C-terminus of the beta chain, while the remainder of the serine residue undergoes an oxidative deamination to produce ammonia and the pyruvoyl group blocking the N-terminus of the alpha chain.

It catalyses the reaction L-arginine + H(+) = agmatine + CO2. It participates in amine and polyamine biosynthesis; agmatine biosynthesis; agmatine from L-arginine: step 1/1. Functionally, specifically catalyzes the decarboxylation of L-arginine to agmatine. Has no S-adenosylmethionine decarboxylase (AdoMetDC) activity. In Caldivirga maquilingensis (strain ATCC 700844 / DSM 13496 / JCM 10307 / IC-167), this protein is Arginine decarboxylase proenzyme.